The sequence spans 530 residues: Purine-cytosine permease FCY22 (530 aa).

Threonine 46 carries the phosphothreonine modification. Helical transmembrane passes span 96–116 (MVIVAYSVGALGPLVFGLNFG), 119–139 (VLVIIFFNILGLIPVALFSLF), 162–182 (FFSLVNVIACVGWCVLNISVS), 197–217 (CPIWAGCLIIAGGTVLVTFFG), 220–240 (VVHAYEKWSWVPNFAAFLVII), 263–283 (GVLSFGSSVFGSAAGWATYAA), 298–318 (IFFSVVAGLAFPLFFTMILGA), 345–365 (AILVPNSLNGFGQFCCVLLAL), 372–392 (VPGMYTVALSAQALWAPLAKI), 396–416 (VWTMAGNAATLGISIPATYYF), 418–438 (GFMENFMDSIGYYLAIYIAIA), and 463–483 (LPIGIAGTAALIAGAFGVALG).

Belongs to the purine-cytosine permease (2.A.39) family.

It localises to the membrane. In terms of biological role, probable purine-cytosine permease. The protein is Purine-cytosine permease FCY22 (FCY22) of Saccharomyces cerevisiae (strain ATCC 204508 / S288c) (Baker's yeast).